A 223-amino-acid polypeptide reads, in one-letter code: MGSKINPIGFRLGVNRDWEAKWYAARGYKETLNEDLRIRKFLDEKLKDASVSTVEIERAANRVNIAIHTARPGMVIGKGGAEVEALNKEINALTNKQVHINIVEIKKPDLEAKLVADGIARQLEARIAFRRASRQAAQRSMRAGAKGIKVQIAGRLNGADIARREWHTEGSVPLHTLRADIDYAWVNAFTTYGEIGVKVWINRGEILPGRKNQPAKRSKGGKK.

One can recognise a KH type-2 domain in the interval 38–106 (IRKFLDEKLK…QVHINIVEIK (69 aa)).

It belongs to the universal ribosomal protein uS3 family. Part of the 30S ribosomal subunit. Forms a tight complex with proteins S10 and S14.

Functionally, binds the lower part of the 30S subunit head. Binds mRNA in the 70S ribosome, positioning it for translation. This Lactobacillus delbrueckii subsp. bulgaricus (strain ATCC 11842 / DSM 20081 / BCRC 10696 / JCM 1002 / NBRC 13953 / NCIMB 11778 / NCTC 12712 / WDCM 00102 / Lb 14) protein is Small ribosomal subunit protein uS3.